The chain runs to 487 residues: uncharacterized protein (487 aa).

The N-terminal stretch at 1-31 (MRFHRQGISAIIGVLLIVLLGFCWKLSGSYG) is a signal peptide. N-linked (GlcNAc...) asparagine glycans are attached at residues Asn-40, Asn-68, Asn-150, Asn-220, Asn-304, Asn-367, Asn-442, and Asn-448. Positions 141–176 (LERRHGRFGNGTNGDHPKGPPPPPPPPDEKGRGSQK) are disordered.

In terms of processing, N-glycosylated.

This is an uncharacterized protein from Saccharomyces cerevisiae (strain ATCC 204508 / S288c) (Baker's yeast).